A 92-amino-acid chain; its full sequence is Small ribosomal subunit protein uS17 (92 aa).

This sequence belongs to the universal ribosomal protein uS17 family. As to quaternary structure, part of the 30S ribosomal subunit.

Its function is as follows. One of the primary rRNA binding proteins, it binds specifically to the 5'-end of 16S ribosomal RNA. The chain is Small ribosomal subunit protein uS17 from Cupriavidus pinatubonensis (strain JMP 134 / LMG 1197) (Cupriavidus necator (strain JMP 134)).